The sequence spans 123 residues: Large ribosomal subunit protein uL14c (123 aa).

It belongs to the universal ribosomal protein uL14 family. In terms of assembly, part of the 50S ribosomal subunit.

It localises to the plastid. The protein localises to the chloroplast. Functionally, binds to 23S rRNA. In Oryza nivara (Indian wild rice), this protein is Large ribosomal subunit protein uL14c.